The following is an 861-amino-acid chain: Leucine--tRNA ligase (861 aa).

A 'HIGH' region motif is present at residues 42–52; that stretch reads PYPSGKLHMGH. A 'KMSKS' region motif is present at residues 620–624; that stretch reads KMSKS. Lys-623 serves as a coordination point for ATP.

Belongs to the class-I aminoacyl-tRNA synthetase family.

Its subcellular location is the cytoplasm. It catalyses the reaction tRNA(Leu) + L-leucine + ATP = L-leucyl-tRNA(Leu) + AMP + diphosphate. In Buchnera aphidicola subsp. Schizaphis graminum (strain Sg), this protein is Leucine--tRNA ligase.